Reading from the N-terminus, the 325-residue chain is Glycerol-3-phosphate dehydrogenase [NAD(P)+] (325 aa).

NADPH contacts are provided by Trp11, Arg30, and Lys103. Sn-glycerol 3-phosphate contacts are provided by Lys103, Gly131, and Ser133. NADPH is bound at residue Ala135. Residues Lys186, Asp242, Ser252, Arg253, and Asn254 each contribute to the sn-glycerol 3-phosphate site. Lys186 serves as the catalytic Proton acceptor. Arg253 lines the NADPH pocket. 2 residues coordinate NADPH: Val279 and Glu281.

Belongs to the NAD-dependent glycerol-3-phosphate dehydrogenase family.

It localises to the cytoplasm. It carries out the reaction sn-glycerol 3-phosphate + NAD(+) = dihydroxyacetone phosphate + NADH + H(+). The enzyme catalyses sn-glycerol 3-phosphate + NADP(+) = dihydroxyacetone phosphate + NADPH + H(+). It participates in membrane lipid metabolism; glycerophospholipid metabolism. In terms of biological role, catalyzes the reduction of the glycolytic intermediate dihydroxyacetone phosphate (DHAP) to sn-glycerol 3-phosphate (G3P), the key precursor for phospholipid synthesis. This chain is Glycerol-3-phosphate dehydrogenase [NAD(P)+], found in Wolbachia pipientis subsp. Culex pipiens (strain wPip).